The chain runs to 114 residues: Large ribosomal subunit protein bL21c (114 aa).

Belongs to the bacterial ribosomal protein bL21 family. In terms of assembly, part of the 50S ribosomal subunit.

Its subcellular location is the plastid. The protein resides in the chloroplast. In terms of biological role, this protein binds to 23S rRNA. The polypeptide is Large ribosomal subunit protein bL21c (Staurastrum punctulatum (Green alga)).